Consider the following 756-residue polypeptide: Membrane-anchored protein 1 (756 aa).

The first 24 residues, 1–24 (MIRNTLAFLAILFLLIPTALLIIG), serve as a signal peptide directing secretion. Residues asparagine 52 and asparagine 64 are each glycosylated (N-linked (GlcNAc...) asparagine). 3 consecutive transmembrane segments (helical) span residues 91–111 (IISAFLSFLSAIFVFFSIFLV), 120–140 (IIVVFITTLLTCLAFAIELVL), and 148–168 (QSYVTAGAIGSDLIAILALCL). Asparagine 190 is a glycosylation site (N-linked (GlcNAc...) asparagine). The tract at residues 281–328 (YDEFRKSESSPSRSSVLSTSKPEVHETEGYCPHKTGNRPGFPSLNIPR) is disordered. Over residues 289–300 (SSPSRSSVLSTS) the composition is skewed to low complexity. 2 N-linked (GlcNAc...) asparagine glycosylation sites follow: asparagine 396 and asparagine 407. The tract at residues 427 to 453 (EPPATRMPQTRSPVNDHSSFPSDLPIK) is disordered. A compositionally biased stretch (polar residues) spans 433-447 (MPQTRSPVNDHSSFP). Serine 438 carries the phosphoserine modification. Asparagine 459, asparagine 470, asparagine 471, asparagine 496, asparagine 497, asparagine 521, asparagine 522, asparagine 547, asparagine 548, asparagine 573, asparagine 574, asparagine 594, asparagine 598, asparagine 599, asparagine 618, asparagine 623, asparagine 649, asparagine 664, asparagine 676, and asparagine 685 each carry an N-linked (GlcNAc...) asparagine glycan. The disordered stretch occupies residues 482–650 (MLKNVGNGPR…MPTSPNSRNN (169 aa)). A compositionally biased stretch (low complexity) spans 485–520 (NVGNGPRNAPRNNSSNNLHAQGGMPMNMRGPRGAPR). Polar residues-rich tracts occupy residues 593–605 (RNTSRNNSSSEFN), 617–629 (RNASRSNSSTDLF), and 640–650 (GMPTSPNSRNN). Residues 686–697 (GSRNPSHGSLNT) show a composition bias toward polar residues. A disordered region spans residues 686-713 (GSRNPSHGSLNTAHAGMGYGPRSMMRDP). N-linked (GlcNAc...) asparagine glycosylation is present at asparagine 715. Residues 735 to 756 (FELPVRGNRNNRRGPGGNRMIR) are disordered.

This sequence to yeast YOL019W and YMR063W.

The protein resides in the cell membrane. It is found in the cell tip. Required for correct cell separation at high temperatures. In Schizosaccharomyces pombe (strain 972 / ATCC 24843) (Fission yeast), this protein is Membrane-anchored protein 1 (mac1).